The sequence spans 1239 residues: Potassium channel subfamily T member 1 (1239 aa).

Positions 1-45 (MARAKLPRSPSEGKAGPGDTPAGSAAPEEPHGLSPLLPTRGGGSV) are disordered. The Cytoplasmic portion of the chain corresponds to 1-93 (MARAKLPRSP…LFFIKNQRSS (93 aa)). The helical transmembrane segment at 94 to 126 (LRIRLFNFSLKLLTCLLYIVRVLLDNPDQGIGC) threads the bilayer. At 127–153 (WGCTKYNYTFNGSSSEFHWAPILWVER) the chain is on the extracellular side. Asn133 and Asn137 each carry an N-linked (GlcNAc...) asparagine glycan. Residues 154–178 (KMALWVIQVIVATISFLETMLLIYL) traverse the membrane as a helical segment. Over 179-192 (SYKGNIWEQIFHVS) the chain is Cytoplasmic. A helical membrane pass occupies residues 193–208 (FVLEMINTLPFIITVF). At 209–215 (WPPLRNL) the chain is on the extracellular side. A helical membrane pass occupies residues 216 to 233 (FIPVFLNCWLAKHALENM). The Cytoplasmic segment spans residues 234 to 246 (INDFHRAILRTQS). The helical transmembrane segment at 247-274 (AMFNQVLILFCTLLCLVFTGTCGIQHLE) threads the bilayer. Over 275 to 281 (RAGGNLN) the chain is Extracellular. An intramembrane region (pore-forming) is located at residues 282 to 302 (LLTSFYFCIVTFSTVGFGDVT). Residues Val296 and Gly297 each contribute to the K(+) site. At 303-304 (PK) the chain is on the extracellular side. Residues 305 to 338 (IWPSQLLVVILICVTLVVLPLQFEELVYLWMERQ) form a helical membrane-spanning segment. The Cytoplasmic portion of the chain corresponds to 339–1239 (KSGGNYSRHR…NPETRDETQL (901 aa)). Residues 352-488 (EKHVVLCVSS…FHVKFADHVV (137 aa)) enclose the RCK N-terminal 1 domain. 4 residues coordinate Na(+): Leu513, His516, Ser538, and Asn540. A disordered region spans residues 658–689 (QNTDCRPSQGGSGGGGGKLTLPTENGSGSRRP). Cys758 and Cys759 together coordinate Zn(2+). K(+)-binding residues include Arg761 and Lys764. 2 residues coordinate Na(+): Arg761 and Lys764. The Zn(2+) site is built by Cys766 and His768. The K(+) site is built by Asn769, Tyr771, Tyr777, and Gly778. Residue Tyr771 participates in Na(+) binding. Position 779 (Phe779) interacts with Na(+). In terms of domain architecture, RCK N-terminal 2 spans 781–921 (NKLIIVSAET…QFRAKDSYSL (141 aa)). 5 residues coordinate K(+): Ser787, Leu818, Asp820, Gly842, and Asp865. Disordered regions lie at residues 1053–1081 (REAK…ADPV) and 1212–1239 (TSSS…ETQL). Over residues 1213–1230 (SSSQSRKSSCSNKLSSCN) the composition is skewed to low complexity.

It belongs to the potassium channel family. Calcium-activated (TC 1.A.1.3) subfamily. KCa4.1/KCNT1 sub-subfamily. Homotetramer; which constitutes the Na(+)-activated K(+) channel. Interacts with KCNT2; these heterodimer channels differ from the homomers in their unitary conductance, kinetic behavior, subcellular localization, and response to activation of protein kinase C. Interacts (via C-terminus) with FMR1; this interaction alters gating properties of KCNT1. Interacts with CRBN via its cytoplasmic C-terminus. As to quaternary structure, does not interact with KCNT2. In terms of processing, phosphorylated by protein kinase C. Phosphorylation of the C-terminal domain increases channel activity. As to expression, detected in brain and brainstem, in vestibular and oculomotor nuclei, the medial nucleus of the trapezoid in the auditory system, in olfactory bulb, red nucleus, and deep cerebellar nuclei. Detected in thalamus, substantia nigra, and amygdala (at protein level). Highly expressed in the brain and kidney.

It is found in the cell membrane. It carries out the reaction K(+)(in) = K(+)(out). Its activity is regulated as follows. Activated by high intracellular Na(+) level. In addition to activation by Na(+), is cooperatively activated by intracellular Cl(-) levels. Activated upon stimulation of G-protein coupled receptors, such as CHRM1 and GRIA1. Sodium-activated K(+) channel. Acts as an important mediator of neuronal membrane excitability. Contributes to the delayed outward currents. Regulates neuronal bursting in sensory neurons. Contributes to synaptic development and plasticity. This Rattus norvegicus (Rat) protein is Potassium channel subfamily T member 1 (Kcnt1).